Here is a 134-residue protein sequence, read N- to C-terminus: (R)-specific enoyl-CoA hydratase (134 aa).

The MaoC-like domain occupies 5–119 (SLEVGQKARL…ATLTTRIFTQ (115 aa)). A (3R)-3-hydroxyacyl-CoA contacts are provided by residues 32–37 (DFNPLH), glycine 55, and phenylalanine 84.

As to quaternary structure, homodimer.

The enzyme catalyses a (3R)-3-hydroxyacyl-CoA = a (2E)-enoyl-CoA + H2O. In terms of biological role, catalyzes the hydration of trans-2-enoyl-CoA with a chain-length of 4-6 carbon atoms, forming the corresponding (3R)-3-hydroxyacyl-CoA. The chain is (R)-specific enoyl-CoA hydratase (phaJ) from Aeromonas caviae (Aeromonas punctata).